Consider the following 379-residue polypeptide: RIB43A-like with coiled-coils protein 1 (379 aa).

Coiled coils occupy residues 43 to 111 (EALN…RCEL) and 285 to 337 (IRKV…EFRR).

It belongs to the RIB43A family. Microtubule inner protein component of sperm flagellar doublet microtubules.

The protein resides in the cytoplasm. It localises to the cytoskeleton. Its subcellular location is the flagellum axoneme. The chain is RIB43A-like with coiled-coils protein 1 (RIBC1) from Bos taurus (Bovine).